The chain runs to 424 residues: Serine--tRNA ligase (424 aa).

Residue 229–231 (TAE) participates in L-serine binding. ATP is bound by residues 260–262 (RKE) and V276. E283 contributes to the L-serine binding site. 347–350 (ELVS) is an ATP binding site. L-serine is bound at residue T383.

The protein belongs to the class-II aminoacyl-tRNA synthetase family. Type-1 seryl-tRNA synthetase subfamily. Homodimer. The tRNA molecule binds across the dimer.

The protein localises to the cytoplasm. The catalysed reaction is tRNA(Ser) + L-serine + ATP = L-seryl-tRNA(Ser) + AMP + diphosphate + H(+). It carries out the reaction tRNA(Sec) + L-serine + ATP = L-seryl-tRNA(Sec) + AMP + diphosphate + H(+). It participates in aminoacyl-tRNA biosynthesis; selenocysteinyl-tRNA(Sec) biosynthesis; L-seryl-tRNA(Sec) from L-serine and tRNA(Sec): step 1/1. In terms of biological role, catalyzes the attachment of serine to tRNA(Ser). Is also able to aminoacylate tRNA(Sec) with serine, to form the misacylated tRNA L-seryl-tRNA(Sec), which will be further converted into selenocysteinyl-tRNA(Sec). This chain is Serine--tRNA ligase, found in Methanosphaera stadtmanae (strain ATCC 43021 / DSM 3091 / JCM 11832 / MCB-3).